Reading from the N-terminus, the 176-residue chain is Small ribosomal subunit protein uS5c (176 aa).

An S5 DRBM domain is found at 26 to 89; that stretch reads LVERLIKISR…TDGRKNLIEL (64 aa).

This sequence belongs to the universal ribosomal protein uS5 family. As to quaternary structure, part of the 30S ribosomal subunit. Contacts protein S4.

The protein localises to the plastid. It is found in the chloroplast. With S4 and S12 plays an important role in translational accuracy. The polypeptide is Small ribosomal subunit protein uS5c (rps5) (Phaeodactylum tricornutum (strain CCAP 1055/1)).